Reading from the N-terminus, the 154-residue chain is Ribosome maturation factor RimP (154 aa).

It belongs to the RimP family.

It is found in the cytoplasm. Required for maturation of 30S ribosomal subunits. The polypeptide is Ribosome maturation factor RimP (Deinococcus deserti (strain DSM 17065 / CIP 109153 / LMG 22923 / VCD115)).